Reading from the N-terminus, the 553-residue chain is Protein DA1-related 1 (553 aa).

Positions 10-41 (GSSHKFSDGQCNGRYREDRNLEGPRYSAEGSD) are disordered. One can recognise a UIM 1 domain in the interval 42–61 (FDKEEIECAIALSLSEQEHV). Residues 62–77 (IPQDDKGKKIIEYKSE) show a composition bias toward basic and acidic residues. Positions 62-91 (IPQDDKGKKIIEYKSETEEDDDDDEDEDEE) are disordered. Residues 78–91 (TEEDDDDDEDEDEE) are compositionally biased toward acidic residues. In terms of domain architecture, UIM 2 spans 87–106 (DEDEEYMRAQLEAAEEEERR). The region spanning 122–141 (AQLEETEKLLAKARLEEEEM) is the UIM 3; degenerate domain. Residues 149 to 168 (EEDELLAKALQESMNVGSPP) form the UIM 4 domain. Serine 166 carries the post-translational modification Phosphoserine. In terms of domain architecture, LIM zinc-binding spans 188–248 (RICVGCQAEI…KLCYKEQHHP (61 aa)).

Interacts with ubiquitin, TCP14 and TCP15. Polyubiquitinated by DA2.

Functionally, acts redundantly with DA1 and DAR2 to regulate endoreduplication during leaf development. Together with DA1 and DAR2, modulates the protein stability of the transcription factors TCP14 and TCP15, which repress endoreduplication by directly regulating the expression of cell-cycle genes. This chain is Protein DA1-related 1, found in Arabidopsis thaliana (Mouse-ear cress).